The chain runs to 20 residues: Citrate synthase (20 aa).

Belongs to the citrate synthase family. In terms of assembly, homodimer.

The catalysed reaction is oxaloacetate + acetyl-CoA + H2O = citrate + CoA + H(+). It functions in the pathway carbohydrate metabolism; tricarboxylic acid cycle; isocitrate from oxaloacetate: step 1/2. This chain is Citrate synthase, found in Populus euphratica (Euphrates poplar).